The sequence spans 173 residues: Ribosome maturation factor RimM (173 aa).

Positions 94-168 (SNESYLCDLL…LIRINPPKGL (75 aa)) constitute a PRC barrel domain.

This sequence belongs to the RimM family. Binds ribosomal protein uS19.

Its subcellular location is the cytoplasm. Its function is as follows. An accessory protein needed during the final step in the assembly of 30S ribosomal subunit, possibly for assembly of the head region. Essential for efficient processing of 16S rRNA. May be needed both before and after RbfA during the maturation of 16S rRNA. It has affinity for free ribosomal 30S subunits but not for 70S ribosomes. This Lawsonia intracellularis (strain PHE/MN1-00) protein is Ribosome maturation factor RimM.